The following is a 667-amino-acid chain: Polypeptide N-acetylgalactosaminyltransferase 3 (667 aa).

The Cytoplasmic portion of the chain corresponds to 1–12 (MGLRFQQLKKLW). A helical; Signal-anchor for type II membrane protein transmembrane segment spans residues 13–35 (LLYLFLLFFAFFMFAISINLYVA). The Lumenal portion of the chain corresponds to 36 to 667 (SIQGGDAEMR…WGFIPLPWRM (632 aa)). N-linked (GlcNAc...) asparagine glycosylation is found at Asn-75 and Asn-129. Intrachain disulfides connect Cys-140-Cys-375, Cys-366-Cys-446, Cys-526-Cys-547, Cys-572-Cys-601, and Cys-626-Cys-649. Residues 149–259 (LPSTSVIIVF…RGWLEPLLSR (111 aa)) form a catalytic subdomain A region. Residues Asp-190 and Arg-220 each contribute to the substrate site. Mn(2+)-binding residues include Asp-243 and His-245. N-linked (GlcNAc...) asparagine glycans are attached at residues Asn-279 and Asn-313. Residues 321-383 (PIATPGMAGG…PCSHVGHVFR (63 aa)) are catalytic subdomain B. Position 352 (Trp-352) interacts with substrate. His-380 contributes to the Mn(2+) binding site. Residues Arg-383 and Tyr-388 each coordinate substrate. The N-linked (GlcNAc...) asparagine glycan is linked to Asn-433. Residues 513–661 (EELMALIDLE…KDITQKWGFI (149 aa)) form the Ricin B-type lectin domain. Residue Asn-590 is glycosylated (N-linked (GlcNAc...) asparagine).

Belongs to the glycosyltransferase 2 family. GalNAc-T subfamily. The cofactor is Mn(2+). As to expression, expressed in developing oocytes and egg chambers. During embryonic stages 9-11, expressed in the primordiums of the foregut, midgut and hindgut. During embryonic stages 12-13, expression is found uniquely in the posterior spiracle. During embryonic stages 14-17, expressed in the pharynx, esophagus and posterior spiracles. Expression observed in the epidermis during embryonic stages 16-17. In third instar larvae, expressed ubiquitously in wing, with increased expression in pleura and notum, eye-antennal, leg and haltere imaginal disks.

Its subcellular location is the golgi apparatus membrane. The enzyme catalyses L-seryl-[protein] + UDP-N-acetyl-alpha-D-galactosamine = a 3-O-[N-acetyl-alpha-D-galactosaminyl]-L-seryl-[protein] + UDP + H(+). It catalyses the reaction L-threonyl-[protein] + UDP-N-acetyl-alpha-D-galactosamine = a 3-O-[N-acetyl-alpha-D-galactosaminyl]-L-threonyl-[protein] + UDP + H(+). Its pathway is protein modification; protein glycosylation. Functionally, catalyzes the initial reaction in O-linked oligosaccharide biosynthesis, the transfer of an N-acetyl-D-galactosamine residue to a serine or threonine residue on the protein receptor. It can both act as a peptide transferase that transfers GalNAc onto unmodified peptide substrates, and as a glycopeptide transferase that requires the prior addition of a GalNAc on a peptide before adding additional GalNAc moieties. Prefers EA2 as substrate. Has weak activity toward Muc5AC-3, -13 and -3/13 substrates. Plays a critical role in the regulation of integrin-mediated cell adhesion during wing development by influencing, via glycosylation, the secretion and localization of the integrin ligand Tig to the basal cell layer interface. Might have a role in protein O-glycosylation in the Golgi and thereby in establishing and/or maintaining a proper secretory apparatus structure. Together with Pgant35A, regulates integrin levels and activity-dependent integrin signaling at the synapse in neurons and muscles. The chain is Polypeptide N-acetylgalactosaminyltransferase 3 from Drosophila melanogaster (Fruit fly).